Reading from the N-terminus, the 356-residue chain is Probable arabinogalactan endo-beta-1,4-galactanase A (356 aa).

An N-terminal signal peptide occupies residues 1–21; sequence MLGKTVLLPLLVLLCHSLASA. A glycan (N-linked (GlcNAc...) asparagine) is linked at Asn133. Residue Glu157 is the Proton donor of the active site. Residue Glu268 is the Nucleophile of the active site.

It belongs to the glycosyl hydrolase 53 family.

The protein resides in the secreted. The catalysed reaction is The enzyme specifically hydrolyzes (1-&gt;4)-beta-D-galactosidic linkages in type I arabinogalactans.. Its function is as follows. Endogalactanase involved in the degradation of plant cell wall polysaccharides, and more particularly of hairy regions of pectin. The polypeptide is Probable arabinogalactan endo-beta-1,4-galactanase A (galA) (Aspergillus fumigatus (strain CBS 144.89 / FGSC A1163 / CEA10) (Neosartorya fumigata)).